We begin with the raw amino-acid sequence, 207 residues long: Large ribosomal subunit protein bL25 (207 aa).

The protein belongs to the bacterial ribosomal protein bL25 family. CTC subfamily. In terms of assembly, part of the 50S ribosomal subunit; part of the 5S rRNA/L5/L18/L25 subcomplex. Contacts the 5S rRNA. Binds to the 5S rRNA independently of L5 and L18.

Functionally, this is one of the proteins that binds to the 5S RNA in the ribosome where it forms part of the central protuberance. This chain is Large ribosomal subunit protein bL25, found in Orientia tsutsugamushi (strain Boryong) (Rickettsia tsutsugamushi).